Reading from the N-terminus, the 433-residue chain is Phosphoglycerate kinase, chloroplastic (433 aa).

Residues 1-28 (GASFSLHVLSKINSYKSQSTKPIRGVAS) constitute a chloroplast transit peptide. (2R)-3-phosphoglycerate-binding residues include Ala-51, Asp-52, Asn-54, Arg-68, Ser-90, His-91, Gly-93, Arg-94, Arg-149, His-181, and Arg-182. Gly-227 provides a ligand contact to ADP. CDP is bound at residue Gly-227. Positions 229 and 233 each coordinate AMP. Lys-233 serves as a coordination point for ATP. Residue Gly-251 coordinates ADP. Gly-251 contributes to the CDP binding site. Positions 252 and 324 each coordinate AMP. The ATP site is built by Gly-252 and Gly-324. 2 residues coordinate CDP: Gly-349 and Phe-354. Phe-354 contacts ADP. Residue Glu-355 participates in AMP binding. Positions 355, 386, and 387 each coordinate ATP. Asp-386 is a binding site for Mg(2+).

The protein belongs to the phosphoglycerate kinase family. Monomer. Mg(2+) is required as a cofactor.

The protein resides in the plastid. Its subcellular location is the chloroplast. The catalysed reaction is (2R)-3-phosphoglycerate + ATP = (2R)-3-phospho-glyceroyl phosphate + ADP. The protein operates within carbohydrate biosynthesis; Calvin cycle. The protein is Phosphoglycerate kinase, chloroplastic of Spinacia oleracea (Spinach).